Reading from the N-terminus, the 60-residue chain is Large ribosomal subunit protein bL32 (60 aa).

The tract at residues 1 to 60 (MAVQQNKKSRSARDMRRSHDALSENALSVEKTTGEVHLRHHVSPEGVYRGRKVVDKGADE) is disordered. The span at 11–22 (SARDMRRSHDAL) shows a compositional bias: basic and acidic residues.

It belongs to the bacterial ribosomal protein bL32 family.

The protein is Large ribosomal subunit protein bL32 of Pseudomonas putida (strain ATCC 700007 / DSM 6899 / JCM 31910 / BCRC 17059 / LMG 24140 / F1).